We begin with the raw amino-acid sequence, 244 residues long: MILNFIIDSSSFEKGLGNIAIWSKLNDPKLTINAYLPLFTIQELDFQRFKRKSVVAKRALHFIDLLQDSTSFKLHLEYPELNEAISWNETVKLCQQNSHTSLSQHQISVIPIRFKKLLKSCYYKCHYKSHDLDEDIDHTNEKSDPDDKGWVLVTEDDTVRSLATQFQIPFISVVEADAIINACIKDKSYVVNEKFSKTVIKKANKVKEQEDGKKVFVTDFKNDFLAPRAKSGELWTPTSAKNKS.

It is found in the cytoplasm. In terms of biological role, involved in nonsense-mediated decay of mRNAs containing premature stop codons. The sequence is that of Nonsense-mediated decay protein 4 (NMD4) from Kluyveromyces lactis (strain ATCC 8585 / CBS 2359 / DSM 70799 / NBRC 1267 / NRRL Y-1140 / WM37) (Yeast).